A 407-amino-acid polypeptide reads, in one-letter code: 45 kDa calcium-binding protein (407 aa).

Residues Met-1 to Ser-35 form the signal peptide. Asn-40 is a glycosylation site (N-linked (GlcNAc...) asparagine). EF-hand domains are found at residues Arg-98 to Glu-133 and Glu-137 to His-172. Ser-99 carries the post-translational modification Phosphoserine. Ca(2+) is bound by residues Asp-111, Asn-113, Asp-115, Lys-117, Glu-122, Asp-150, Asp-152, Asp-154, His-156, and Glu-161. 2 positions are modified to phosphothreonine: Thr-193 and Thr-217. Over residues Gly-249–Gly-259 the composition is skewed to low complexity. The segment at Gly-249–Cys-282 is disordered. Ca(2+) contacts are provided by Asp-291, Asp-293, Asp-295, Gln-297, and Glu-302. 3 consecutive EF-hand domains span residues Asp-291–Asn-313, Trp-323–Tyr-358, and Asn-359–Ser-394. A Phosphothreonine modification is found at Thr-310. Ca(2+)-binding residues include Asp-336, Asn-338, and Asp-340. Thr-344 is subject to Phosphothreonine. The Ca(2+) site is built by Glu-347, Asp-372, Asn-374, Asn-376, His-378, and Glu-383. The necessary for intracellular retention in Golgi apparatus lumen stretch occupies residues Pro-354–Phe-407.

The protein belongs to the CREC family.

It localises to the golgi apparatus lumen. Its function is as follows. May regulate calcium-dependent activities in the endoplasmic reticulum lumen or post-ER compartment. This is 45 kDa calcium-binding protein (SDF4) from Macaca fascicularis (Crab-eating macaque).